Here is a 584-residue protein sequence, read N- to C-terminus: MKYRTHRCNELTSNHIGENVQLAGWVHRYRNHGGVVFIDLRDRFGITQIVCREDEQPELHQRLDAVRSEWVLSVRGKVCPRLAGMENPNLATGHIEVEVASFEVLSKSQNLPFSIADDHINVNEELRLEYRYLDMRRGDIIEKLLCRHQVMLACRNFMDAQGFTEIVTPVLGKSTPEGARDYLVPSRIYPGKFYALPQSPQLFKQLLMVGGLDRYFQIATCFRDEDLRADRQPEFAQIDIEMSFGDTQDLLPIIEQLVATLFATQGIEIPLPLAKMTYQEAKDSYGTDKPDLRFDLKLKDCRDYAKRSSFSIFLDQLAHGGTIKGFCVPGGATMSRKQLDGYTEFVKRYGAMGLVWIKNQEGKVASNIAKFMDEEVFHELFAYFDAKDQDILLLIAAPESVANQSLDHLRRLIAKERELYSDNQYNFVWITDFPLFSLEDGKIVAEHHPFTAPLEEDIPLLETDPLAVRSSSYDLVLNGYEIASGSQRIHNPDLQSQIFTILKISPESIQEKFGFFIKALSFGTPPHLGIALGLDRLVMVLTAAESIREVIAFPKTQKASDLMMNAPSEIMSSQLKELSIKVAF.

Residue Glu-177 coordinates L-aspartate. The interval 201–204 (QLFK) is aspartate. An L-aspartate-binding site is contributed by Arg-223. Residues 223-225 (RDE) and Gln-232 each bind ATP. Residue His-447 coordinates L-aspartate. Glu-481 provides a ligand contact to ATP. Residue Arg-488 coordinates L-aspartate. ATP is bound at residue 533 to 536 (GLDR).

This sequence belongs to the class-II aminoacyl-tRNA synthetase family. Type 1 subfamily. In terms of assembly, homodimer.

Its subcellular location is the cytoplasm. It carries out the reaction tRNA(Asx) + L-aspartate + ATP = L-aspartyl-tRNA(Asx) + AMP + diphosphate. Functionally, aspartyl-tRNA synthetase with relaxed tRNA specificity since it is able to aspartylate not only its cognate tRNA(Asp) but also tRNA(Asn). Reaction proceeds in two steps: L-aspartate is first activated by ATP to form Asp-AMP and then transferred to the acceptor end of tRNA(Asp/Asn). This Chlamydia pneumoniae (Chlamydophila pneumoniae) protein is Aspartate--tRNA(Asp/Asn) ligase.